The chain runs to 374 residues: UDP-N-acetylglucosamine--N-acetylmuramyl-(pentapeptide) pyrophosphoryl-undecaprenol N-acetylglucosamine transferase (374 aa).

UDP-N-acetyl-alpha-D-glucosamine is bound by residues 10–12 (TGG), Asn-124, Arg-166, Ser-196, and Gln-294.

The protein belongs to the glycosyltransferase 28 family. MurG subfamily.

The protein resides in the cell membrane. It catalyses the reaction di-trans,octa-cis-undecaprenyl diphospho-N-acetyl-alpha-D-muramoyl-L-alanyl-D-glutamyl-meso-2,6-diaminopimeloyl-D-alanyl-D-alanine + UDP-N-acetyl-alpha-D-glucosamine = di-trans,octa-cis-undecaprenyl diphospho-[N-acetyl-alpha-D-glucosaminyl-(1-&gt;4)]-N-acetyl-alpha-D-muramoyl-L-alanyl-D-glutamyl-meso-2,6-diaminopimeloyl-D-alanyl-D-alanine + UDP + H(+). It functions in the pathway cell wall biogenesis; peptidoglycan biosynthesis. Its function is as follows. Cell wall formation. Catalyzes the transfer of a GlcNAc subunit on undecaprenyl-pyrophosphoryl-MurNAc-pentapeptide (lipid intermediate I) to form undecaprenyl-pyrophosphoryl-MurNAc-(pentapeptide)GlcNAc (lipid intermediate II). The polypeptide is UDP-N-acetylglucosamine--N-acetylmuramyl-(pentapeptide) pyrophosphoryl-undecaprenol N-acetylglucosamine transferase (Symbiobacterium thermophilum (strain DSM 24528 / JCM 14929 / IAM 14863 / T)).